Consider the following 142-residue polypeptide: Large ribosomal subunit protein uL13 (142 aa).

It belongs to the universal ribosomal protein uL13 family. As to quaternary structure, part of the 50S ribosomal subunit.

Its function is as follows. This protein is one of the early assembly proteins of the 50S ribosomal subunit, although it is not seen to bind rRNA by itself. It is important during the early stages of 50S assembly. The chain is Large ribosomal subunit protein uL13 from Alteromonas mediterranea (strain DSM 17117 / CIP 110805 / LMG 28347 / Deep ecotype).